The following is a 450-amino-acid chain: MKATKTTYKKDPMGLTPSQIVNELNRFIVGQEKAKKAVAIALRNRCRRKRVEGNLRNEIVPKNILMIGSTGVGKTEIARRLATLTNSPFYKIEATKFTEVGYVGRDVESIIRDLVEIAVNTEKTLAKTKVDIHAREKAIERILDSLVGKTSSSETREKFKEKILNGELDDTEIEISVADTTPVGGGSFEIPGMPGASMGVLNLGDMIGRALGSSKTKTKKMLVKDAMAIIIPEESEKLIDQEKIIQQAINLAENDGIVFIDEIDKIASTGSSRAKNAEISREGVQRDLLPLIEGTTVNTKYGPVKTDHILFIASGAFHIAKPSDLLPELQGRLPIRVELNSLTKDDMIKILLEPETSLIKQYSALIGTEDVRLEFAASAIEKIADYAITVNLEVEDIGARRLHTILENLLEDISFEASEMKGKKITIDDKFVENQLSKIITNLDLAKFVL.

ATP contacts are provided by residues Val-29, 71 to 76 (GVGKTE), Asp-261, Glu-328, and Arg-400.

It belongs to the ClpX chaperone family. HslU subfamily. As to quaternary structure, a double ring-shaped homohexamer of HslV is capped on each side by a ring-shaped HslU homohexamer. The assembly of the HslU/HslV complex is dependent on binding of ATP.

The protein localises to the cytoplasm. ATPase subunit of a proteasome-like degradation complex; this subunit has chaperone activity. The binding of ATP and its subsequent hydrolysis by HslU are essential for unfolding of protein substrates subsequently hydrolyzed by HslV. HslU recognizes the N-terminal part of its protein substrates and unfolds these before they are guided to HslV for hydrolysis. This chain is ATP-dependent protease ATPase subunit HslU, found in Rickettsia rickettsii (strain Iowa).